A 1322-amino-acid chain; its full sequence is C-Jun-amino-terminal kinase-interacting protein 3 (1322 aa).

The 89-residue stretch at 12–100 (VVVYQDDYCS…LTQYEREKAL (89 aa)) folds into the RH1 domain. The interval 50–80 (EVVKELMPLVVNVLENLDSVLSENQEHEVEL) is kinesin-binding domain (KBD); essential for its function in axon elongation. Positions 66–167 (LDSVLSENQE…KKEYNALHQR (102 aa)) form a coiled coil. Disordered regions lie at residues 183-211 (KMQQ…SLNV) and 245-317 (SSSY…NSRN). The JNK-binding domain (JBD); essential for its function in axon elongation stretch occupies residues 210 to 226 (NVFPLADGMVRAQMGGK). The span at 261–270 (SSAAATPSTT) shows a compositional bias: low complexity. A phosphothreonine mark is found at Thr-266, Thr-276, and Thr-287. Positions 271–282 (GTKSNTPTSSVP) are enriched in polar residues. Residues 305–315 (NNKRAREKRNS) are compositionally biased toward basic residues. A phosphoserine mark is found at Ser-315, Ser-365, and Ser-366. Residues 424–459 (QLLETKNALNVVKNDLIAKVDQLSGEQEVLKGELEA) form a leucine zipper-like domain (LZ); essential for its function in axon elongation region. The stretch at 443 to 534 (VDQLSGEQEV…KERLMELQEA (92 aa)) forms a coiled coil. The tract at residues 459 to 515 (AAKQAKVKLENRIKELEEELKRVKSEAVTARREPREEVEDDKIPMAQRRRFTRVEMA) is interaction with NTRK2. Positions 506 to 580 (RRRFTRVEMA…SPPPAKRSYP (75 aa)) constitute an RH2 domain. Phosphoserine is present on residues Ser-588 and Ser-662. Disordered regions lie at residues 704-754 (WKPN…EADA), 844-952 (PRSN…TTSS), and 1281-1307 (RIGD…LSKA). Positions 724–750 (LTCDREGEGEPKSTHPSPEKKKAKEVP) are enriched in basic and acidic residues. A compositionally biased stretch (polar residues) spans 914–937 (APTQSSSTQPASENGSESDGSIVQ). Low complexity predominate over residues 941 to 952 (EPSGESSATTSS). A compositionally biased stretch (acidic residues) spans 1285 to 1294 (GEDDETEEGT).

The protein belongs to the JIP scaffold family. As to quaternary structure, forms homo- or heterooligomeric complexes. The central region of MAPK8IP3 interacts with the C-terminal of MAPK8IP2 but not MAPK8IP1. Binds specific components of the JNK signaling pathway namely MAPK8/JNK1, MAPK9/JNK2 and MAPK10/JNK3 to the N-terminal region, MAP2K4/MKK4 and MAP2K7/MKK7 to the central region and MAP3K11 to the C-terminal region. Binds the TPR motif-containing C-terminal of kinesin light chain, KLC1. Pre-assembled MAPK8IP1 scaffolding complexes are then transported as a cargo of kinesin, to the required subcellular location. Interacts with ROCK1 and this interaction is enhanced by ultraviolet-B (UVB) radiation. Interacts with SH3RF2. Interacts with NTRK3/TRKC. Interacts with NTRK2/TRKB. In terms of processing, phosphorylation by ROCK1 is crucial for the recruitment of JNK.

The protein resides in the cytoplasm. Its subcellular location is the golgi apparatus. It is found in the cytoplasmic vesicle. It localises to the cell projection. The protein localises to the growth cone. The protein resides in the axon. Its subcellular location is the dendrite. It is found in the perinuclear region. In terms of biological role, the JNK-interacting protein (JIP) group of scaffold proteins selectively mediates JNK signaling by aggregating specific components of the MAPK cascade to form a functional JNK signaling module. May function as a regulator of vesicle transport, through interactions with the JNK-signaling components and motor proteins. Promotes neuronal axon elongation in a kinesin- and JNK-dependent manner. Activates cofilin at axon tips via local activation of JNK, thereby regulating filopodial dynamics and enhancing axon elongation. Its binding to kinesin heavy chains (KHC), promotes kinesin-1 motility along microtubules and is essential for axon elongation and regeneration. Regulates cortical neuronal migration by mediating NTRK2/TRKB anterograde axonal transport during brain development. Acts as an adapter that bridges the interaction between NTRK2/TRKB and KLC1 and drives NTRK2/TRKB axonal but not dendritic anterograde transport, which is essential for subsequent BDNF-triggered signaling and filopodia formation. In Rattus norvegicus (Rat), this protein is C-Jun-amino-terminal kinase-interacting protein 3 (Mapk8ip3).